The following is a 364-amino-acid chain: Succinate--CoA ligase [ADP-forming] subunit beta (364 aa).

The 221-residue stretch at 9-229 (KNIFKKYGIP…EFEEYKNKEK (221 aa)) folds into the ATP-grasp domain. Residues lysine 43, 50 to 52 (GRG), glutamate 89, leucine 92, and glutamate 97 each bind ATP. Residues asparagine 189 and aspartate 203 each contribute to the Mg(2+) site. Residues asparagine 246 and 303 to 305 (GIT) contribute to the substrate site.

The protein belongs to the succinate/malate CoA ligase beta subunit family. In terms of assembly, heterotetramer of two alpha and two beta subunits. Requires Mg(2+) as cofactor.

It catalyses the reaction succinate + ATP + CoA = succinyl-CoA + ADP + phosphate. The enzyme catalyses GTP + succinate + CoA = succinyl-CoA + GDP + phosphate. The protein operates within carbohydrate metabolism; tricarboxylic acid cycle; succinate from succinyl-CoA (ligase route): step 1/1. Functionally, succinyl-CoA synthetase functions in the citric acid cycle (TCA), coupling the hydrolysis of succinyl-CoA to the synthesis of either ATP or GTP and thus represents the only step of substrate-level phosphorylation in the TCA. The beta subunit provides nucleotide specificity of the enzyme and binds the substrate succinate, while the binding sites for coenzyme A and phosphate are found in the alpha subunit. This is Succinate--CoA ligase [ADP-forming] subunit beta from Methanocaldococcus jannaschii (strain ATCC 43067 / DSM 2661 / JAL-1 / JCM 10045 / NBRC 100440) (Methanococcus jannaschii).